The primary structure comprises 166 residues: uncharacterized protein (166 aa).

117–124 contacts ATP; that stretch reads AAKSGGKT.

This is an uncharacterized protein from Mycoplasma pneumoniae (strain ATCC 29342 / M129 / Subtype 1) (Mycoplasmoides pneumoniae).